Consider the following 60-residue polypeptide: Large ribosomal subunit protein bL32 (60 aa).

Belongs to the bacterial ribosomal protein bL32 family.

The sequence is that of Large ribosomal subunit protein bL32 from Synechococcus sp. (strain JA-3-3Ab) (Cyanobacteria bacterium Yellowstone A-Prime).